Consider the following 511-residue polypeptide: Type 2 DNA topoisomerase 6 subunit B-like (511 aa).

The tract at residues 398–485 is disordered; it reads DSAQGTEDAP…RALAPGRASL (88 aa). The span at 408–422 shows a compositional bias: polar residues; sequence DNSSLELLADTSGQA. Low complexity predominate over residues 440-451; sequence LRSARAPSPSEA. Residues 466-475 are compositionally biased toward basic and acidic residues; sequence RGREHREAHG.

Belongs to the TOP6B-like family. Heterotetramer of SPO11 and 2 TOP6BL chains. Interacts with SPO11. As to expression, detected in lung, spleen,colon and in skeletal muscle. Expressed in the ovaries, Fallopian tubes and uterus.

The protein resides in the chromosome. Component of a topoisomerase 6 complex specifically required for meiotic recombination. Together with SPO11, mediates DNA cleavage that forms the double-strand breaks (DSB) that initiate meiotic recombination. The complex promotes relaxation of negative and positive supercoiled DNA and DNA decatenation through cleavage and ligation cycles. In Homo sapiens (Human), this protein is Type 2 DNA topoisomerase 6 subunit B-like.